The primary structure comprises 358 residues: L-Ala-D/L-Glu epimerase (358 aa).

Substrate is bound by residues Arg-24, Thr-135, and Lys-160. Lys-162 functions as the Proton acceptor; specific for (R)-substrate epimerization in the catalytic mechanism. Positions 190, 218, and 243 each coordinate Mg(2+). Residue Lys-267 is the Proton acceptor; specific for (S)-substrate epimerization of the active site. Residues Cys-295, Asp-320, and Asp-322 each contribute to the substrate site.

The protein belongs to the mandelate racemase/muconate lactonizing enzyme family. Mg(2+) serves as cofactor.

The catalysed reaction is L-alanyl-L-glutamate = L-alanyl-D-glutamate. The protein operates within cell wall degradation; peptidoglycan degradation. Catalyzes the epimerization of L-Ala-D-Glu to L-Ala-L-Glu and has probably a role in the metabolism of the murein peptide, of which L-Ala-D-Glu is a component. Is also able to catalyze the epimerization of L-Ala-D-Asp. This Clostridium acetobutylicum (strain ATCC 824 / DSM 792 / JCM 1419 / IAM 19013 / LMG 5710 / NBRC 13948 / NRRL B-527 / VKM B-1787 / 2291 / W) protein is L-Ala-D/L-Glu epimerase.